Consider the following 89-residue polypeptide: UPF0223 protein BCA_4066 (89 aa).

Belongs to the UPF0223 family.

This Bacillus cereus (strain 03BB102) protein is UPF0223 protein BCA_4066.